The sequence spans 964 residues: Syndetin (964 aa).

Methionine 1 carries the N-acetylmethionine modification. The tract at residues 1-25 (MQKIKSLMTRQGLKSPPESLNDLGA) is disordered. Residue serine 15 is modified to Phosphoserine. Coiled-coil stretches lie at residues 81 to 107 (LNLQ…VADL) and 216 to 244 (YSCI…LSKI). Serine 494, serine 498, serine 559, and serine 561 each carry phosphoserine. A disordered region spans residues 532–563 (DEETEDVLASNGYESDEQEKSAYQDYDSDSDV). Lysine 963 is covalently cross-linked (Glycyl lysine isopeptide (Lys-Gly) (interchain with G-Cter in SUMO1); alternate). Lysine 963 is covalently cross-linked (Glycyl lysine isopeptide (Lys-Gly) (interchain with G-Cter in SUMO2); alternate).

It belongs to the syndetin family. In terms of assembly, component of the endosome-associated retrograde protein (EARP) complex, composed of VPS51, VPS52, VPS53 and VPS50/Syndetin. The EARP complex interacts with EIPR1. Interacts with VPS51 and VPS53 in an EIPR1-independent manner. Expressed in the brain (at protein level).

The protein localises to the recycling endosome. Its subcellular location is the membrane. Functionally, acts as a component of the EARP complex that is involved in endocytic recycling. The EARP complex associates with Rab4-positive endosomes and promotes recycling of internalized transferrin receptor (TFRC) to the plasma membrane. Within the EARP complex, required to tether the complex to recycling endosomes. Not involved in retrograde transport from early and late endosomes to the trans-Golgi network (TGN). The polypeptide is Syndetin (Rattus norvegicus (Rat)).